The following is a 133-amino-acid chain: Ribosome-binding factor A (133 aa).

Belongs to the RbfA family. Monomer. Binds 30S ribosomal subunits, but not 50S ribosomal subunits or 70S ribosomes.

It is found in the cytoplasm. One of several proteins that assist in the late maturation steps of the functional core of the 30S ribosomal subunit. Associates with free 30S ribosomal subunits (but not with 30S subunits that are part of 70S ribosomes or polysomes). Required for efficient processing of 16S rRNA. May interact with the 5'-terminal helix region of 16S rRNA. The sequence is that of Ribosome-binding factor A from Acinetobacter baumannii (strain AB307-0294).